We begin with the raw amino-acid sequence, 411 residues long: Basic leucine zipper 10 (411 aa).

4 disordered regions span residues 1-36 (MNSI…DEVS), 76-99 (SLPS…DSGN), 140-251 (SVKP…NDLK), and 362-411 (NNFA…KCVD). A compositionally biased stretch (polar residues) spans 24-36 (PDSSKPVTADEVS). A compositionally biased stretch (basic and acidic residues) spans 89-98 (DSRFRDRDSG). 2 stretches are compositionally biased toward polar residues: residues 146-173 (STSS…TSSL) and 183-193 (SMKQVTSGSSR). Ser196 is subject to Phosphoserine. Residues 196–206 (SDDEDLDEENE) are compositionally biased toward acidic residues. The 64-residue stretch at 215–278 (DVKKSRRMLS…DEAAVGNRIL (64 aa)) folds into the bZIP domain. The basic motif stretch occupies residues 217–236 (KKSRRMLSNRESARRSRRRK). The short motif at 219–226 (SRRMLSNR) is the Nuclear localization signal element. Residues 243 to 257 (LETQVNDLKGEHSSL) form a leucine-zipper region. Over residues 368 to 390 (PSQTSSPLQRIRNGQNHHVTPSA) the composition is skewed to polar residues.

This sequence belongs to the bZIP family. As to quaternary structure, forms a heterodimer with BZIP1, BZIP2, BZIP9, BZIP11, BZIP44, BZIP53 and BZIP63. Interacts with ABI3 and forms a complex made of ABI3, BZIP53 and BZIP10. Binding with LSD1 leads to cytoplasmic retention. In terms of tissue distribution, expressed in roots, shoots, stems, young leaves, trichomes, hydathodes, siliques, seeds, and flowers, mostly in vascular tissues.

The protein localises to the nucleus. Its subcellular location is the cytoplasm. Functionally, transcription factor that binds to the C-box-like motif (5'-TGCTGACGTCA-3') and G-box-like motif (5'-CCACGTGGCC-3'), ABRE elements, of gene promoters. Binds to the 5'-ACGT-3' motif of seed storage protein (SSP) encoding gene promoters (e.g. At2S and CRU3) and promotes their expression in seeds when in complex with ABI3 and BZIP53. Involved in the defense responses to the biotrophic pathogen Hyaloperonospora parasitica and oxidative stress responses; mediates positively cell death. Promotes BZIP53-mediated response to hypoosmolarity stress that leads to POX1/PRODH1 accumulation. The sequence is that of Basic leucine zipper 10 (BZIP10) from Arabidopsis thaliana (Mouse-ear cress).